A 503-amino-acid polypeptide reads, in one-letter code: Activin receptor type-1-like (503 aa).

The N-terminal stretch at 1–21 is a signal peptide; the sequence is MTLGSPRKGLLMLLMALVTQG. Over 22 to 118 the chain is Extracellular; sequence DPVKPSRGPL…PSEQPGTDGQ (97 aa). Cystine bridges form between Cys-34–Cys-51, Cys-36–Cys-41, and Cys-46–Cys-69. Positions 73-76 are mediates specificity for BMP ligand; it reads HREL. Disulfide bonds link Cys-77-Cys-89 and Cys-90-Cys-95. Asn-98 is a glycosylation site (N-linked (GlcNAc...) asparagine). The chain crosses the membrane as a helical span at residues 119-141; it reads LALILGPVLALLALVALGVLGLW. Topologically, residues 142-503 are cytoplasmic; the sequence is HVRRRQEKQR…NSPEKPKVIQ (362 aa). Residues Ser-155, Ser-160, and Ser-161 each carry the phosphoserine modification. The region spanning 172–201 is the GS domain; the sequence is SMLGDLLDSDCTTGSGSGLPFLVQRTVARQ. In terms of domain architecture, Protein kinase spans 202 to 492; that stretch reads VALVECVGKG…LRIKKTLQKI (291 aa). ATP-binding positions include 208–216 and Lys-229; that span reads VGKGRYGEV. Catalysis depends on Asp-330, which acts as the Proton acceptor.

Belongs to the protein kinase superfamily. TKL Ser/Thr protein kinase family. TGFB receptor subfamily. As to quaternary structure, interacts with TSC22D1/TSC-22. Mg(2+) is required as a cofactor. Requires Mn(2+) as cofactor.

The protein localises to the cell membrane. The enzyme catalyses L-threonyl-[receptor-protein] + ATP = O-phospho-L-threonyl-[receptor-protein] + ADP + H(+). It catalyses the reaction L-seryl-[receptor-protein] + ATP = O-phospho-L-seryl-[receptor-protein] + ADP + H(+). In terms of biological role, type I receptor for TGF-beta family ligands BMP9/GDF2 and BMP10 and important regulator of normal blood vessel development. On ligand binding, forms a receptor complex consisting of two type II and two type I transmembrane serine/threonine kinases. Type II receptors phosphorylate and activate type I receptors which autophosphorylate, then bind and activate SMAD transcriptional regulators. May bind activin as well. This is Activin receptor type-1-like (ACVRL1) from Homo sapiens (Human).